We begin with the raw amino-acid sequence, 31 residues long: Cytochrome b6-f complex subunit 6 (31 aa).

The helical transmembrane segment at 4–24 (ITSFFGFLLAALTITSVLFIG) threads the bilayer.

It belongs to the PetL family. In terms of assembly, the 4 large subunits of the cytochrome b6-f complex are cytochrome b6, subunit IV (17 kDa polypeptide, PetD), cytochrome f and the Rieske protein, while the 4 small subunits are PetG, PetL, PetM and PetN. The complex functions as a dimer.

It is found in the plastid. The protein localises to the chloroplast thylakoid membrane. Its function is as follows. Component of the cytochrome b6-f complex, which mediates electron transfer between photosystem II (PSII) and photosystem I (PSI), cyclic electron flow around PSI, and state transitions. PetL is important for photoautotrophic growth as well as for electron transfer efficiency and stability of the cytochrome b6-f complex. The polypeptide is Cytochrome b6-f complex subunit 6 (Oenothera elata subsp. hookeri (Hooker's evening primrose)).